We begin with the raw amino-acid sequence, 60 residues long: Large ribosomal subunit protein uL30 (60 aa).

The protein belongs to the universal ribosomal protein uL30 family. Part of the 50S ribosomal subunit.

The protein is Large ribosomal subunit protein uL30 of Shewanella loihica (strain ATCC BAA-1088 / PV-4).